The following is a 357-amino-acid chain: Protein RecA (357 aa).

67–74 (GPESSGKT) serves as a coordination point for ATP. Positions 335 to 357 (LASSASDDESTEGNIDLETGEIF) are disordered.

It belongs to the RecA family.

The protein localises to the cytoplasm. Can catalyze the hydrolysis of ATP in the presence of single-stranded DNA, the ATP-dependent uptake of single-stranded DNA by duplex DNA, and the ATP-dependent hybridization of homologous single-stranded DNAs. It interacts with LexA causing its activation and leading to its autocatalytic cleavage. The sequence is that of Protein RecA from Shewanella putrefaciens (strain CN-32 / ATCC BAA-453).